Reading from the N-terminus, the 375-residue chain is 5-amino-6-(D-ribitylamino)uracil--L-tyrosine 4-hydroxyphenyl transferase 1 (375 aa).

Residues 50 to 284 (VTYVVNRNIN…AVSRILFHGH (235 aa)) enclose the Radical SAM core domain. Positions 64, 68, and 71 each coordinate [4Fe-4S] cluster.

This sequence belongs to the radical SAM superfamily. CofH family. In terms of assembly, consists of two subunits, CofG and CofH. Requires [4Fe-4S] cluster as cofactor.

The catalysed reaction is 5-amino-6-(D-ribitylamino)uracil + L-tyrosine + S-adenosyl-L-methionine = 5-amino-5-(4-hydroxybenzyl)-6-(D-ribitylimino)-5,6-dihydrouracil + 2-iminoacetate + 5'-deoxyadenosine + L-methionine + H(+). It participates in cofactor biosynthesis; coenzyme F0 biosynthesis. Functionally, catalyzes the radical-mediated synthesis of 5-amino-5-(4-hydroxybenzyl)-6-(D-ribitylimino)-5,6-dihydrouracil from 5-amino-6-(D-ribitylamino)uracil and L-tyrosine. The protein is 5-amino-6-(D-ribitylamino)uracil--L-tyrosine 4-hydroxyphenyl transferase 1 of Methanosarcina acetivorans (strain ATCC 35395 / DSM 2834 / JCM 12185 / C2A).